The following is a 367-amino-acid chain: uncharacterized protein (367 aa).

The protein localises to the mitochondrion. This is an uncharacterized protein from Paramecium tetraurelia.